A 147-amino-acid polypeptide reads, in one-letter code: Large ribosomal subunit protein uL15 (147 aa).

The disordered stretch occupies residues 1-58 (MKLFELKPAPGAKKRPKRVGRGESSGHGKTSTRGHKGQWARSGGGVRPGFEGGQMPLT). The segment covering 42–52 (SGGGVRPGFEG) has biased composition (gly residues).

The protein belongs to the universal ribosomal protein uL15 family. Part of the 50S ribosomal subunit.

Functionally, binds to the 23S rRNA. This Caldicellulosiruptor saccharolyticus (strain ATCC 43494 / DSM 8903 / Tp8T 6331) protein is Large ribosomal subunit protein uL15.